The sequence spans 3084 residues: Highly reducing polyketide synthase sdnO (3084 aa).

The 427-residue stretch at 4-430 folds into the Ketosynthase family 3 (KS3) domain; that stretch reads PIPLAVVGIA…GTNAHAVLEK (427 aa). Residues cysteine 178, histidine 313, and histidine 353 each act as for beta-ketoacyl synthase activity in the active site. Residues 541–841 are malonyl-CoA:ACP transacylase (MAT) domain; the sequence is FIFTGQGAQW…LAGPLRQSVA (301 aa). Serine 632 acts as the For malonyltransferase activity in catalysis. An N-terminal hotdog fold region spans residues 931 to 1071; that stretch reads HDLLGLRMTD…GSVLIDLVSS (141 aa). Residues 931-1243 are dehydratase (DH) domain; that stretch reads HDLLGLRMTD…RSAEADMLVF (313 aa). In terms of domain architecture, PKS/mFAS DH spans 931 to 1275; that stretch reads HDLLGLRMTD…LRSLAALDGA (345 aa). Histidine 963 acts as the Proton acceptor; for dehydratase activity in catalysis. The tract at residues 1099 to 1275 is C-terminal hotdog fold; the sequence is LQPGEDIPPS…LRSLAALDGA (177 aa). Aspartate 1177 (proton donor; for dehydratase activity) is an active-site residue. Residues 1733–2045 form an enoylreductase (ER) domain region; that stretch reads GTAHAATFVE…RHENMTKYVV (313 aa). Residues 2069-2252 are catalytic ketoreductase (KRc) domain; sequence ATYVVAGGLG…YMALNIGLIE (184 aa). One can recognise a Carrier domain in the interval 2363-2440; sequence DIEAFAARAI…ALARKVTLRS (78 aa). The residue at position 2400 (serine 2400) is an O-(pantetheine 4'-phosphoryl)serine. A disordered region spans residues 2445 to 2501; that stretch reads GGAGGDASSTGNSESMARTPSDSSTVPTSIPATPSRSPSREPPAKETLTKSQQHLPI. The span at 2456 to 2481 shows a compositional bias: polar residues; it reads NSESMARTPSDSSTVPTSIPATPSRS. The segment covering 2482–2492 has biased composition (basic and acidic residues); that stretch reads PSREPPAKETL. The segment at 2864–3084 is choline/carnitine acyltransferase domain; that stretch reads HFYSQLNRAF…LGVVRRVVEG (221 aa).

Its pathway is antibiotic biosynthesis. Highly reducing polyketide synthase; part of the gene cluster that mediates the biosynthesis of sordarin and hypoxysordarin, glycoside antibiotics with a unique tetracyclic diterpene aglycone structure. First, the geranylgeranyl diphosphate synthase sdnC constructs GGDP from farnesyl diphosphate and isopentenyl diphosphate. The diterpene cyclase sdnA then catalyzes the cyclization of GGDP to afford cycloaraneosene. Cycloaraneosene is then hydroxylated four times by the putative cytochrome P450 monooxygenases sdnB, sdnE, sdnF and sdnH to give a hydroxylated cycloaraneosene derivative such as cycloaraneosene-8,9,13,19-tetraol. Although the order of the hydroxylations is unclear, at least C8, C9 and C13 of the cycloaraneosene skeleton are hydroxylated before the sordaricin formation. Dehydration of the 13-hydroxy group of the hydroxylated cycloaraneosene derivative might be catalyzed by an unassigned hypothetical protein such as sdnG and sdnP to construct the cyclopentadiene moiety. The FAD-dependent oxidoreductase sdnN is proposed to catalyze the oxidation at C9 of the hydroxylated cycloaraneosene derivative and also catalyze the Baeyer-Villiger oxidation to give the lactone intermediate. The presumed lactone intermediate would be hydrolyzed to give an acrolein moiety and a carboxylate moiety. Then, [4+2]cycloaddition would occur between the acrolein moiety and the cyclopentadiene moiety to give sordaricin. SdnN might also be involved in the [4+2]cycloaddition after the hypothesized oxidation to accommodate the oxidized product and prompt the [4+2]cycloaddition. GDP-6-deoxy-D-altrose may be biosynthesized from GDP-D-mannose by the putative GDP-mannose-4,6-dehydratase sdnI and the short-chain dehydrogenase sdnK. The glycosyltransferase sdnJ catalyzes the attachment of 6-deoxy-D-altrose onto the 19-hydroxy group of sordaricin to give 4'-O-demethylsordarin. The methyltransferase sdnD would complete the biosynthesis of sordarin. Sordarin can be further modified into hypoxysordarin. The unique acyl chain at the 3'-hydroxy group of hypoxysordarin would be constructed by an iterative type I PKS sdnO and the trans-acting polyketide methyltransferase sdnL. SdnL would be responsible for the introduction of an alpha-methyl group of the polyketide chain. Alternatively, the putative beta-lactamase-like sdnR might be responsible for the cleavage and transfer of the polyketide chain from the PKS sdnO to sordarin. Two putative cytochrome P450 monooxygenases, sdnQ and sdnT, might catalyze the epoxidations of the polyketide chain to complete the biosynthesis of hypoxysordarin. Transcriptional regulators sdnM and sdnS are presumably encoded for the transcriptional regulation of the expression of the sdn gene cluster. This Sordaria araneosa (Pleurage araneosa) protein is Highly reducing polyketide synthase sdnO.